We begin with the raw amino-acid sequence, 520 residues long: Glutamate--cysteine ligase (520 aa).

It belongs to the glutamate--cysteine ligase type 1 family. Type 1 subfamily.

It carries out the reaction L-cysteine + L-glutamate + ATP = gamma-L-glutamyl-L-cysteine + ADP + phosphate + H(+). It functions in the pathway sulfur metabolism; glutathione biosynthesis; glutathione from L-cysteine and L-glutamate: step 1/2. This Sodalis glossinidius (strain morsitans) protein is Glutamate--cysteine ligase.